A 370-amino-acid chain; its full sequence is Pyruvate dehydrogenase E1 component subunit alpha (370 aa).

In terms of assembly, heterodimer of an alpha and a beta chain. Requires thiamine diphosphate as cofactor.

It catalyses the reaction N(6)-[(R)-lipoyl]-L-lysyl-[protein] + pyruvate + H(+) = N(6)-[(R)-S(8)-acetyldihydrolipoyl]-L-lysyl-[protein] + CO2. Its function is as follows. The pyruvate dehydrogenase complex catalyzes the overall conversion of pyruvate to acetyl-CoA and CO(2). It contains multiple copies of three enzymatic components: pyruvate dehydrogenase (E1), dihydrolipoamide acetyltransferase (E2) and lipoamide dehydrogenase (E3). The chain is Pyruvate dehydrogenase E1 component subunit alpha (pdhA) from Staphylococcus aureus (strain MRSA252).